We begin with the raw amino-acid sequence, 612 residues long: Chaperone protein DnaK (612 aa).

Thr-174 is subject to Phosphothreonine; by autocatalysis. The tract at residues 578-612 (GAQAGAQGQGAAGGQKQDGNVYDADYKVVDDDKKE) is disordered. Positions 601-612 (ADYKVVDDDKKE) are enriched in basic and acidic residues.

Belongs to the heat shock protein 70 family.

In terms of biological role, acts as a chaperone. The sequence is that of Chaperone protein DnaK from Moorella thermoacetica (strain ATCC 39073 / JCM 9320).